The sequence spans 148 residues: Arginine repressor (148 aa).

It belongs to the ArgR family.

It is found in the cytoplasm. It participates in amino-acid biosynthesis; L-arginine biosynthesis [regulation]. Regulates arginine biosynthesis genes. The protein is Arginine repressor of Pelodictyon phaeoclathratiforme (strain DSM 5477 / BU-1).